The following is a 325-amino-acid chain: uncharacterized protein (325 aa).

Residues 108 to 141 form a disordered region; it reads PHRTQGISSTSSKSSKGGKKTPVRSTPKEIKKAT.

This is an uncharacterized protein from Homo sapiens (Human).